We begin with the raw amino-acid sequence, 387 residues long: Norsolorinic acid reductase stcV (387 aa).

Aspartate 69 is a binding site for NADP(+). Catalysis depends on tyrosine 74, which acts as the Proton donor. A substrate-binding site is contributed by histidine 148. NADP(+) contacts are provided by residues 178 to 179 (SD), glutamine 204, 233 to 243 (GALGRGQYKSA), and 301 to 309 (RTVEQLEAN).

Belongs to the aldo/keto reductase family. Aldo/keto reductase 2 subfamily.

It functions in the pathway mycotoxin biosynthesis; sterigmatocystin biosynthesis. Norsolorinic acid reductase; part of the gene cluster that mediates the biosynthesis of sterigmatocystin (ST), a polyketide-derived furanocoumarin which is part of the most toxic and carcinogenic compounds among the known mycotoxins. The first step in the biosynthesis of sterigmatocystin is the production of hexanoate by the fatty acid synthase (FAS) units stcJ and stcK. The polyketide backbone is assembled by the non-reducing polyketide synthase stcA by condensation of the starter hexanoyl-CoA and 7 malonyl-CoA extender units followed by cyclization and release of norsolorinic acid. Norsolorinic acid is the first stable intermediate in the biosynthesis of sterigmatocystin and is converted into averantin (AVN) by the ketoreductase stcE which reduces the hexanoate ketone to an alcohol. Averantin is then oxidized into 5'-hydroxyaverantin (HAVN) by the cytochrome P450 monooxygenase stcF. 5'-hydroxyaverantin is further converted to 5'-oxyaverantin (OAVN) by the 5'-hydroxyaverantin dehydrogenase stcG. The next step is the conversion of OAVN into averufin (AVF) which is catalyzed by a yet to be identified enzyme. The cytochrome P450 monooxygenase stcB and the flavin-binding monooxygenase stcW are both required for the conversion of averufin to 1-hydroxyversicolorone. The esterase stcI probably catalyzes the formation of versiconal hemiacetal acetate from 1-hydroxyversicolorone. The oxydoreductase stcN then probably catalyzes the biosynthetic step from versiconal to versicolorin B (VERB). The next step is performed by the versicolorin B desaturase stcL to produce versicolorin A (VERA). The ketoreductase stcU and the cytochrome P450 monooxygenase stcS are involved in the conversion of versicolorin A to demethylsterigmatocystin. The Baeyer-Villiger oxidas stcQ and the reductase stcR might be involved in the biosynthetic step from versicolorin A to demethylsterigmatocystin. The final step in the biosynthesis of sterigmatocystin is the methylation of demethylsterigmatocystin catalyzed by the methyltransferase stcP. The protein is Norsolorinic acid reductase stcV of Emericella nidulans (strain FGSC A4 / ATCC 38163 / CBS 112.46 / NRRL 194 / M139) (Aspergillus nidulans).